We begin with the raw amino-acid sequence, 158 residues long: MALRAPWIALCCVLAVLFVVPAATRDEERQKRGVDFGLQRGFSGSELAKLKLALARAQDPHGPGRKRRDAYEMERQKRGVDFGLQRGFSGSELAKLKLALARAQDPHGPGRKRRDAYEMERQKRGVDFGLQRGFSGSELAKLKLALARAQDPHGPGRK.

Positions 1–24 (MALRAPWIALCCVLAVLFVVPAAT) are cleaved as a signal peptide. A propeptide spanning residues 25–32 (RDEERQKR) is cleaved from the precursor. A run of 2 repeats spans residues 33–78 (GVDF…RQKR) and 79–124 (GVDF…RQKR). The tract at residues 33 to 158 (GVDFGLQRGF…AQDPHGPGRK (126 aa)) is 3 X 46 AA tandem repeats. Pro63 carries the proline amide modification. Residues 64-78 (GRKRRDAYEMERQKR) constitute a propeptide that is removed on maturation. The disordered stretch occupies residues 101–120 (ARAQDPHGPGRKRRDAYEME). Proline amide is present on Pro109. Positions 110-124 (GRKRRDAYEMERQKR) are excised as a propeptide. The stretch at 125-158 (GVDFGLQRGFSGSELAKLKLALARAQDPHGPGRK) is one 3; half-length repeat. Residue Pro155 is modified to Proline amide.

It belongs to the diuretic hormone class 2 family. In terms of tissue distribution, expressed by the venom secretory cell of the spine. The spine is a cuticular structure containing a single large nucleated venom-secreting cell at its base. It is an independent unit capable of producing, storing and injecting venom. On the back of D.vulnerans caterpillars, spines are grouped together by 50 to 100 to form scoli, of which there are eight in D.vulnerans.

The protein resides in the secreted. Probable toxin. Does not show insecticidal, antimicrobial and antiparasitic activities. Does not induce increase in intracellular calcium in mouse DRG neurons, suggesting that it does not induce pain. The chain is U-limacoditoxin(8)-Dv66 from Doratifera vulnerans (Mottled cup moth).